Here is a 404-residue protein sequence, read N- to C-terminus: Formate-dependent phosphoribosylglycinamide formyltransferase (404 aa).

Residues 25–26 and Glu85 each bind N(1)-(5-phospho-beta-D-ribosyl)glycinamide; that span reads EL. ATP is bound by residues Arg118, Lys159, 164–169, 199–202, and Glu207; these read SSGKGQ and EGFV. Residues 123–318 enclose the ATP-grasp domain; that stretch reads RLAAEELGLP…EFELHARAIL (196 aa). Positions 277 and 289 each coordinate Mg(2+). N(1)-(5-phospho-beta-D-ribosyl)glycinamide contacts are provided by residues Asp296, Lys365, and 372–373; that span reads RR.

This sequence belongs to the PurK/PurT family. Homodimer.

It carries out the reaction N(1)-(5-phospho-beta-D-ribosyl)glycinamide + formate + ATP = N(2)-formyl-N(1)-(5-phospho-beta-D-ribosyl)glycinamide + ADP + phosphate + H(+). The protein operates within purine metabolism; IMP biosynthesis via de novo pathway; N(2)-formyl-N(1)-(5-phospho-D-ribosyl)glycinamide from N(1)-(5-phospho-D-ribosyl)glycinamide (formate route): step 1/1. In terms of biological role, involved in the de novo purine biosynthesis. Catalyzes the transfer of formate to 5-phospho-ribosyl-glycinamide (GAR), producing 5-phospho-ribosyl-N-formylglycinamide (FGAR). Formate is provided by PurU via hydrolysis of 10-formyl-tetrahydrofolate. The sequence is that of Formate-dependent phosphoribosylglycinamide formyltransferase from Burkholderia cenocepacia (strain HI2424).